The following is a 151-amino-acid chain: Transcriptional regulator MraZ (151 aa).

SpoVT-AbrB domains are found at residues 5 to 56 (THRH…PLPT) and 85 to 128 (SEEL…DAAR).

Belongs to the MraZ family. As to quaternary structure, forms oligomers.

The protein localises to the cytoplasm. The protein resides in the nucleoid. The chain is Transcriptional regulator MraZ from Acidithiobacillus ferrooxidans (strain ATCC 23270 / DSM 14882 / CIP 104768 / NCIMB 8455) (Ferrobacillus ferrooxidans (strain ATCC 23270)).